A 332-amino-acid chain; its full sequence is L-lactate dehydrogenase A chain (332 aa).

Residues 29 to 57 (GAVG…IEDK) and arginine 99 each bind NAD(+). Substrate is bound by residues arginine 106, asparagine 138, and arginine 169. Asparagine 138 provides a ligand contact to NAD(+). Histidine 193 acts as the Proton acceptor in catalysis. Residue threonine 248 coordinates substrate.

This sequence belongs to the LDH/MDH superfamily. LDH family. In terms of assembly, homotetramer.

The protein localises to the cytoplasm. The catalysed reaction is (S)-lactate + NAD(+) = pyruvate + NADH + H(+). It functions in the pathway fermentation; pyruvate fermentation to lactate; (S)-lactate from pyruvate: step 1/1. Its function is as follows. Interconverts simultaneously and stereospecifically pyruvate and lactate with concomitant interconversion of NADH and NAD(+). The sequence is that of L-lactate dehydrogenase A chain (LDHA) from Sceloporus woodi (Florida scrub lizard).